Reading from the N-terminus, the 468-residue chain is MVVTRIAPSPTGDPHVGTAYIALFNYAWARRNGGRFIVRIEDTDRARYVPGAEERILAALKWLGLSYDEGPDVGGPHGPYRQSERLPLYQKYAEELLKRGWAYRAFETPEELEQIRKEKGGYDGRARNIPPEEAEERARRGEPHVIRLKVPRPGTTEVKDELRGVVVYDNQEIPDVVLLKSDGYPTYHLANVVDDHLMGVTDVIRAEEWLVSTPIHVLLYRAFGWEAPRFYHMPLLRNPDKTKISKRKSHTSLDWYKAEGFLPEALRNYLCLMGFSMPDGREIFTLEEFIQAFTWERVSLGGPVFDLEKLRWMNGKYIREVLSLEEVAERVKPFLREAGLSWESEAYLRRAVELMRPRFDTLKEFPEKARYLFTEDYPVSEKAQRKLEEGLPLLKELYPRLRAQEEWTEAALEALLRGFAAEKGVKLGQVAQPLRAALTGSLETPGLFEILALLGKERALRRLERALA.

5–7 is a binding site for L-glutamate; that stretch reads RIA. The 'HIGH' region signature appears at 8-18; sequence PSPTGDPHVGT. Histidine 15 contacts ATP. L-glutamate contacts are provided by residues glutamate 41, 187 to 191, and arginine 205; that span reads YHLAN. Residues glutamate 208, leucine 236, 243 to 247, and lysine 246 each bind ATP; that span reads KISKR. The short motif at 243-247 is the 'KMSKS' region element; that stretch reads KISKR. The segment at 432–447 is interaction with tRNA; it reads QPLRAALTGSLETPGL.

This sequence belongs to the class-I aminoacyl-tRNA synthetase family. Glutamate--tRNA ligase type 1 subfamily. In terms of assembly, monomer.

The protein localises to the cytoplasm. The catalysed reaction is tRNA(Glu) + L-glutamate + ATP = L-glutamyl-tRNA(Glu) + AMP + diphosphate. Its activity is regulated as follows. In the absence of bound tRNA, ATP is bound in a non-productive mode, and the enzyme cannot activate amino acids. Its function is as follows. Catalyzes the attachment of glutamate to tRNA(Glu) in a two-step reaction: glutamate is first activated by ATP to form Glu-AMP and then transferred to the acceptor end of tRNA(Glu). The chain is Glutamate--tRNA ligase from Thermus thermophilus (strain ATCC 27634 / DSM 579 / HB8).